Consider the following 325-residue polypeptide: Endo-1,4-beta-xylanase 2 (325 aa).

A signal peptide spans Met-1–Ala-18. The GH10 domain maps to Ala-26–Ile-325. A glycan (N-linked (GlcNAc...) asparagine) is linked at Asn-28. Residue Glu-157 is the Proton donor of the active site. Glu-262 serves as the catalytic Nucleophile. Cys-280 and Cys-286 are joined by a disulfide.

Belongs to the glycosyl hydrolase 10 (cellulase F) family.

It is found in the secreted. The enzyme catalyses Endohydrolysis of (1-&gt;4)-beta-D-xylosidic linkages in xylans.. Its pathway is glycan degradation; xylan degradation. Functionally, endo-1,4-beta-xylanase involved in the hydrolysis of xylan, a major structural heterogeneous polysaccharide found in plant biomass representing the second most abundant polysaccharide in the biosphere, after cellulose. The sequence is that of Endo-1,4-beta-xylanase 2 (xyl2) from Claviceps purpurea (Ergot fungus).